The following is a 538-amino-acid chain: Cytochrome c-552 (538 aa).

The first 55 residues, 1–55, serve as a signal peptide directing secretion; it reads MKIYLRFVWILIIILNFLLNLFITTNGVIIVNAFKKSLIVAASFASLSLFNSATA. His133 contributes to the heme c binding site. Heme is bound by residues Cys161, Cys164, and Lys165. Residues Cys199, Cys202, His203, Cys264, Cys267, and His268 each contribute to the heme c site. Positions 270, 271, 316, and 318 each coordinate Ca(2+). Tyr271 is a binding site for substrate. His319 contacts substrate. His330, Cys337, Cys340, His341, His356, Cys369, Cys372, His373, and His448 together coordinate heme c.

It belongs to the cytochrome c-552 family. It depends on Ca(2+) as a cofactor. Requires heme c as cofactor.

The protein localises to the periplasm. The enzyme catalyses 6 Fe(III)-[cytochrome c] + NH4(+) + 2 H2O = 6 Fe(II)-[cytochrome c] + nitrite + 8 H(+). It functions in the pathway nitrogen metabolism; nitrate reduction (assimilation). Its function is as follows. Catalyzes the reduction of nitrite to ammonia, consuming six electrons in the process. The protein is Cytochrome c-552 of Haemophilus influenzae (strain 86-028NP).